We begin with the raw amino-acid sequence, 444 residues long: Phosphoglucosamine mutase (444 aa).

The active-site Phosphoserine intermediate is Ser102. Mg(2+)-binding residues include Ser102, Asp241, Asp243, and Asp245. Ser102 is subject to Phosphoserine.

The protein belongs to the phosphohexose mutase family. The cofactor is Mg(2+). Activated by phosphorylation.

The enzyme catalyses alpha-D-glucosamine 1-phosphate = D-glucosamine 6-phosphate. Functionally, catalyzes the conversion of glucosamine-6-phosphate to glucosamine-1-phosphate. The protein is Phosphoglucosamine mutase of Mannheimia succiniciproducens (strain KCTC 0769BP / MBEL55E).